We begin with the raw amino-acid sequence, 374 residues long: Isopentenyl-diphosphate delta-isomerase (374 aa).

A substrate-binding site is contributed by 13-14; sequence RK. FMN-binding positions include 71–73, serine 104, and asparagine 132; that span reads GMT. 104–106 contributes to the substrate binding site; the sequence is SQR. Glutamine 171 serves as a coordination point for substrate. Glutamate 172 serves as a coordination point for Mg(2+). FMN-binding positions include lysine 203, threonine 233, 282–284, and 303–304; these read GMR and AL.

It belongs to the IPP isomerase type 2 family. Homooctamer. Dimer of tetramers. The cofactor is FMN. NADPH serves as cofactor. Mg(2+) is required as a cofactor.

It is found in the cytoplasm. It catalyses the reaction isopentenyl diphosphate = dimethylallyl diphosphate. Involved in the biosynthesis of isoprenoids. Catalyzes the 1,3-allylic rearrangement of the homoallylic substrate isopentenyl (IPP) to its allylic isomer, dimethylallyl diphosphate (DMAPP). In Thermococcus kodakarensis (strain ATCC BAA-918 / JCM 12380 / KOD1) (Pyrococcus kodakaraensis (strain KOD1)), this protein is Isopentenyl-diphosphate delta-isomerase.